Reading from the N-terminus, the 306-residue chain is Formamidopyrimidine-DNA glycosylase (306 aa).

Catalysis depends on proline 2, which acts as the Schiff-base intermediate with DNA. Catalysis depends on glutamate 3, which acts as the Proton donor. The Proton donor; for beta-elimination activity role is filled by lysine 58. 3 residues coordinate DNA: histidine 114, arginine 136, and lysine 179. Residues 270–306 (SVYDREGEACRTSGCRGTVERIVQAGRSTFYCPHCQK) form an FPG-type zinc finger. Arginine 296 functions as the Proton donor; for delta-elimination activity in the catalytic mechanism.

The protein belongs to the FPG family. Monomer. Zn(2+) is required as a cofactor.

It catalyses the reaction Hydrolysis of DNA containing ring-opened 7-methylguanine residues, releasing 2,6-diamino-4-hydroxy-5-(N-methyl)formamidopyrimidine.. It carries out the reaction 2'-deoxyribonucleotide-(2'-deoxyribose 5'-phosphate)-2'-deoxyribonucleotide-DNA = a 3'-end 2'-deoxyribonucleotide-(2,3-dehydro-2,3-deoxyribose 5'-phosphate)-DNA + a 5'-end 5'-phospho-2'-deoxyribonucleoside-DNA + H(+). Functionally, involved in base excision repair of DNA damaged by oxidation or by mutagenic agents. Acts as a DNA glycosylase that recognizes and removes damaged bases. Has a preference for oxidized purines, such as 7,8-dihydro-8-oxoguanine (8-oxoG). Has AP (apurinic/apyrimidinic) lyase activity and introduces nicks in the DNA strand. Cleaves the DNA backbone by beta-delta elimination to generate a single-strand break at the site of the removed base with both 3'- and 5'-phosphates. The protein is Formamidopyrimidine-DNA glycosylase of Sinorhizobium medicae (strain WSM419) (Ensifer medicae).